Here is a 288-residue protein sequence, read N- to C-terminus: Pantothenate synthetase (288 aa).

30–37 lines the ATP pocket; it reads MGFLHEGH. Histidine 37 functions as the Proton donor in the catalytic mechanism. Residue glutamine 61 coordinates (R)-pantoate. Glutamine 61 contacts beta-alanine. An ATP-binding site is contributed by 147–150; sequence GLKD. Glutamine 153 contacts (R)-pantoate. ATP is bound by residues valine 176 and 184–187; that span reads KSSR.

This sequence belongs to the pantothenate synthetase family. In terms of assembly, homodimer.

Its subcellular location is the cytoplasm. The catalysed reaction is (R)-pantoate + beta-alanine + ATP = (R)-pantothenate + AMP + diphosphate + H(+). The protein operates within cofactor biosynthesis; (R)-pantothenate biosynthesis; (R)-pantothenate from (R)-pantoate and beta-alanine: step 1/1. Catalyzes the condensation of pantoate with beta-alanine in an ATP-dependent reaction via a pantoyl-adenylate intermediate. This chain is Pantothenate synthetase, found in Bacillus pumilus (strain SAFR-032).